Consider the following 303-residue polypeptide: MTDSTCPMIRNYGAIVPESQTMVKDDSELDIFSEKYREPVFASVLRSIGCFLGYACIPTNGLCGRYYPYKSISKGYRGVVQEFGRVKREINDGMHYVNPVTESISQVDMRIKVIDLDKKDVMTSDKLSIKIDSVVYYQVTNIHDALFKIDNVVQSIIELSYATLRNVIGNSTLEVCLTRRDKIAESIKSIVSEATNGWGIEIKSIQITDIVVPTDIINSLSSAIVAERQAEAKIILAQGNVKSAELMRQAADMLDSKVAMQVRSLEVIDKLATSNNSKIVFLPTDLNLSTRNNIIYSDIQSTN.

This sequence belongs to the band 7/mec-2 family.

This is Putative band 7 family protein R614 from Acanthamoeba polyphaga (Amoeba).